The primary structure comprises 196 residues: dTTP/UTP pyrophosphatase (196 aa).

Catalysis depends on Asp-78, which acts as the Proton acceptor.

Belongs to the Maf family. YhdE subfamily. A divalent metal cation is required as a cofactor.

Its subcellular location is the cytoplasm. It carries out the reaction dTTP + H2O = dTMP + diphosphate + H(+). The enzyme catalyses UTP + H2O = UMP + diphosphate + H(+). Nucleoside triphosphate pyrophosphatase that hydrolyzes dTTP and UTP. May have a dual role in cell division arrest and in preventing the incorporation of modified nucleotides into cellular nucleic acids. In Photobacterium profundum (strain SS9), this protein is dTTP/UTP pyrophosphatase.